Reading from the N-terminus, the 1021-residue chain is 2-oxoglutarate dehydrogenase complex component E1 (1021 aa).

The transit peptide at 1–40 (MFNLRTCASKLRPLTASQTIRSLKHNRPAAPRTFQQFRCL) directs the protein to the mitochondrion. 3 residues coordinate Ca(2+): histidine 142, aspartate 155, and aspartate 157. Arginine 311, aspartate 410, asparagine 443, and isoleucine 445 together coordinate thiamine diphosphate. Residues aspartate 410, asparagine 443, and isoleucine 445 each contribute to the Mg(2+) site. Lysine 533 is covalently cross-linked (Glycyl lysine isopeptide (Lys-Gly) (interchain with G-Cter in ubiquitin)). Glutamine 675 lines the thiamine diphosphate pocket.

Belongs to the alpha-ketoglutarate dehydrogenase family. As to quaternary structure, homodimer. The 2-oxoglutarate dehydrogenase complex is composed of OGDH (2-oxoglutarate dehydrogenase; E1), DLST (dihydrolipoamide succinyltransferase; E2) and DLD (dihydrolipoamide dehydrogenase; E3). It contains multiple copies of the three enzymatic components (E1, E2 and E3). In the nucleus, the 2-oxoglutarate dehydrogenase complex associates with kat2a. Requires thiamine diphosphate as cofactor. It depends on Mg(2+) as a cofactor. In terms of tissue distribution, expressed in the brain.

The protein localises to the mitochondrion. The protein resides in the nucleus. The enzyme catalyses N(6)-[(R)-lipoyl]-L-lysyl-[protein] + 2-oxoglutarate + H(+) = N(6)-[(R)-S(8)-succinyldihydrolipoyl]-L-lysyl-[protein] + CO2. With respect to regulation, calcium ions and ADP stimulate, whereas ATP and NADH reduce catalytic activity. 2-oxoglutarate dehydrogenase (E1o) component of the 2-oxoglutarate dehydrogenase complex (OGDHC). Participates in the first step, rate limiting for the overall conversion of 2-oxoglutarate to succinyl-CoA and CO(2) catalyzed by the whole OGDHC. Catalyzes the irreversible decarboxylation of 2-oxoglutarate (alpha-ketoglutarate) via the thiamine diphosphate (ThDP) cofactor and subsequent transfer of the decarboxylated acyl intermediate on an oxidized dihydrolipoyl group that is covalently amidated to the E2 enzyme (dihydrolipoyllysine-residue succinyltransferase or DLST). Plays a key role in the Krebs (citric acid) cycle, which is a common pathway for oxidation of fuel molecules, including carbohydrates, fatty acids, and amino acids. Can catalyze the decarboxylation of 2-oxoadipate in vitro, but at a much lower rate than 2-oxoglutarate. Mainly active in the mitochondrion. A fraction of the 2-oxoglutarate dehydrogenase complex also localizes in the nucleus and is required for lysine succinylation of histones: associates with KAT2A on chromatin and provides succinyl-CoA to histone succinyltransferase KAT2A. This is 2-oxoglutarate dehydrogenase complex component E1 (ogdh) from Xenopus laevis (African clawed frog).